The sequence spans 153 residues: Large ribosomal subunit protein uL15 (153 aa).

Residues 21-40 (RGIGSGKGKTGGRGIKGQKS) form a disordered region. The segment covering 23–35 (IGSGKGKTGGRGI) has biased composition (gly residues).

This sequence belongs to the universal ribosomal protein uL15 family. Part of the 50S ribosomal subunit.

In terms of biological role, binds to the 23S rRNA. The protein is Large ribosomal subunit protein uL15 of Rickettsia canadensis (strain McKiel).